The sequence spans 495 residues: Steroid 21-hydroxylase (495 aa).

The heme b site is built by Arg-92 and Lys-121. Residue Arg-234 participates in 17alpha-hydroxyprogesterone binding. Residue Arg-234 participates in progesterone binding. Positions 366, 427, and 429 each coordinate heme b.

This sequence belongs to the cytochrome P450 family. The cofactor is heme b.

It localises to the endoplasmic reticulum membrane. The protein localises to the microsome membrane. It catalyses the reaction progesterone + reduced [NADPH--hemoprotein reductase] + O2 = 21-hydroxyprogesterone + oxidized [NADPH--hemoprotein reductase] + H2O + H(+). The enzyme catalyses 17alpha-hydroxyprogesterone + reduced [NADPH--hemoprotein reductase] + O2 = 11-deoxycortisol + oxidized [NADPH--hemoprotein reductase] + H2O + H(+). In terms of biological role, a cytochrome P450 monooxygenase that plays a major role in adrenal steroidogenesis. Catalyzes the hydroxylation at C-21 of progesterone and 17alpha-hydroxyprogesterone to respectively form 11-deoxycorticosterone and 11-deoxycortisol, intermediate metabolites in the biosynthetic pathway of mineralocorticoids and glucocorticoids. Mechanistically, uses molecular oxygen inserting one oxygen atom into a substrate, and reducing the second into a water molecule, with two electrons provided by NADPH via cytochrome P450 reductase (CPR; NADPH-ferrihemoprotein reductase). This is Steroid 21-hydroxylase (CYP21A2) from Homo sapiens (Human).